We begin with the raw amino-acid sequence, 195 residues long: Thymidine kinase (195 aa).

ATP is bound by residues 15-22 (GSMFSGKS) and 88-91 (DEVQ). Catalysis depends on Glu-89, which acts as the Proton acceptor. Residues Cys-145, Cys-148, Cys-183, and Cys-186 each contribute to the Zn(2+) site.

This sequence belongs to the thymidine kinase family. Homotetramer.

The protein resides in the cytoplasm. It carries out the reaction thymidine + ATP = dTMP + ADP + H(+). The sequence is that of Thymidine kinase from Bacillus cereus (strain ZK / E33L).